Here is a 952-residue protein sequence, read N- to C-terminus: Eukaryotic initiation factor 4F subunit p150 (952 aa).

3 disordered regions span residues 1–77 (MTDE…NYNG), 115–389 (GSAP…DAGT), and 481–575 (VIPP…LVPS). A compositionally biased stretch (polar residues) spans 7–16 (HPTQSASKQE). Residues 29–46 (ESQQQRGYTNYNNGSNYT) are compositionally biased toward low complexity. Over residues 47–56 (QKKPYNSNRP) the composition is skewed to polar residues. A compositionally biased stretch (low complexity) spans 65 to 74 (GPNRYNNRGN). Over residues 140–151 (SGEHLDLKEQHK) the composition is skewed to basic and acidic residues. The segment covering 154–166 (LQSQERSTVSPQP) has biased composition (polar residues). Serine 163 carries the post-translational modification Phosphoserine. Positions 175–191 (DSTSTSTPTPTPSTNDS) are enriched in low complexity. Threonine 181 carries the phosphothreonine modification. Residues 188-299 (TNDSKASSEE…KEESTPKVLT (112 aa)) are interaction with PAB1. Serine 195 is subject to Phosphoserine. Positions 218-228 (AALEKKRKEQL) are enriched in basic and acidic residues. Polar residues predominate over residues 229 to 244 (EGSSGNNNIPMKTTPE). Composition is skewed to basic and acidic residues over residues 246–276 (VEEK…KQET), 283–294 (QGEKGQIKEEST), and 309–333 (QQKE…ETKS). Over residues 355–368 (TEQSNIDESATTPA) the composition is skewed to polar residues. Serine 503 bears the Phosphoserine mark. Composition is skewed to basic and acidic residues over residues 504 to 521 (RGHD…DRAN) and 532 to 569 (RMND…KEEV). An MIF4G domain is found at 607 to 850 (ERKMKSLLNK…IDIKELRHDK (244 aa)). The segment at 870-952 (EEERQRQLKN…ALMGESDDEE (83 aa)) is disordered. Residues 879–894 (NNSRSNSRRTNNSSNR) are compositionally biased toward low complexity. Position 883 is a phosphoserine (serine 883). A Phosphothreonine modification is found at threonine 888. Phosphoserine occurs at positions 892, 896, 908, and 948. The segment covering 908–922 (SFITTRTYSQRNSQR) has biased composition (polar residues).

Belongs to the eukaryotic initiation factor 4G family. Component of the eIF4F complex, which composition varies with external and internal environmental conditions. It is composed of at least eIF4A (TIF1/TIF2), eIF4E (TIF45) and eIF4G (TIF4631 or TIF4632). Interacts with PAT1 in a RNA-dependent manner.

It localises to the cytoplasm. The protein localises to the P-body. Its subcellular location is the stress granule. Functionally, component of the eIF4F complex, which interacts with the mRNA cap structure and serves as an initial point of assembly for the translation apparatus. Stimulates translation by interaction with polyadenylate-binding protein PAB1, bringing the 5'- and 3'-ends of the mRNA in proximity. The formation of this circular mRNP structure appears to be critical for the synergistic effects of the cap and the poly(A) tail in facilitating translation initiation, recycling of ribosomes, and mRNA stability. TIF4631 is probably essential when TIF4632 is missing. The protein is Eukaryotic initiation factor 4F subunit p150 of Saccharomyces cerevisiae (strain ATCC 204508 / S288c) (Baker's yeast).